Reading from the N-terminus, the 203-residue chain is Urease accessory protein UreE (203 aa).

The segment at 170–203 is disordered; that stretch reads EHHGHSHSHSHSHSHDHDHQHGPSCSHGHHHGHR.

It belongs to the UreE family.

It localises to the cytoplasm. Involved in urease metallocenter assembly. Binds nickel. Probably functions as a nickel donor during metallocenter assembly. This is Urease accessory protein UreE from Burkholderia mallei (strain SAVP1).